A 186-amino-acid polypeptide reads, in one-letter code: Threonylcarbamoyl-AMP synthase (186 aa).

Residues 1–186 (MADTWEAAHS…LNNQVFRDDA (186 aa)) form the YrdC-like domain.

This sequence belongs to the SUA5 family. TsaC subfamily.

Its subcellular location is the cytoplasm. It carries out the reaction L-threonine + hydrogencarbonate + ATP = L-threonylcarbamoyladenylate + diphosphate + H2O. Required for the formation of a threonylcarbamoyl group on adenosine at position 37 (t(6)A37) in tRNAs that read codons beginning with adenine. Catalyzes the conversion of L-threonine, HCO(3)(-)/CO(2) and ATP to give threonylcarbamoyl-AMP (TC-AMP) as the acyladenylate intermediate, with the release of diphosphate. The protein is Threonylcarbamoyl-AMP synthase of Idiomarina loihiensis (strain ATCC BAA-735 / DSM 15497 / L2-TR).